Here is a 321-residue protein sequence, read N- to C-terminus: Lipoyl synthase (321 aa).

7 residues coordinate [4Fe-4S] cluster: Cys-68, Cys-73, Cys-79, Cys-94, Cys-98, Cys-101, and Ser-308. The Radical SAM core domain maps to 80-297 (FNHGTATFMI…KEIALELGFT (218 aa)).

This sequence belongs to the radical SAM superfamily. Lipoyl synthase family. The cofactor is [4Fe-4S] cluster.

The protein resides in the cytoplasm. It catalyses the reaction [[Fe-S] cluster scaffold protein carrying a second [4Fe-4S](2+) cluster] + N(6)-octanoyl-L-lysyl-[protein] + 2 oxidized [2Fe-2S]-[ferredoxin] + 2 S-adenosyl-L-methionine + 4 H(+) = [[Fe-S] cluster scaffold protein] + N(6)-[(R)-dihydrolipoyl]-L-lysyl-[protein] + 4 Fe(3+) + 2 hydrogen sulfide + 2 5'-deoxyadenosine + 2 L-methionine + 2 reduced [2Fe-2S]-[ferredoxin]. The protein operates within protein modification; protein lipoylation via endogenous pathway; protein N(6)-(lipoyl)lysine from octanoyl-[acyl-carrier-protein]: step 2/2. In terms of biological role, catalyzes the radical-mediated insertion of two sulfur atoms into the C-6 and C-8 positions of the octanoyl moiety bound to the lipoyl domains of lipoate-dependent enzymes, thereby converting the octanoylated domains into lipoylated derivatives. The polypeptide is Lipoyl synthase (Vibrio cholerae serotype O1 (strain ATCC 39541 / Classical Ogawa 395 / O395)).